Here is a 114-residue protein sequence, read N- to C-terminus: Thioredoxin H1 (114 aa).

Ala-2 bears the N-acetylalanine mark. The Thioredoxin domain occupies 2 to 114; the sequence is ASEEGQVIAC…LQSTIAKHLA (113 aa). Catalysis depends on nucleophile residues Cys-40 and Cys-43. The cysteines at positions 40 and 43 are disulfide-linked.

The protein belongs to the thioredoxin family. Plant H-type subfamily. In terms of assembly, interacts with FBA6. Interacts with MDH1.

The protein resides in the cytoplasm. In terms of biological role, thiol-disulfide oxidoreductase involved in the redox regulation of a number of cytosolic enzymes. Activates the cytosolic malate dehydrogenase (MDH) probably by reducing an interchain disulfide bond of the inactive MDH homodimer. Possesses insulin disulfide bonds reducing activity. The sequence is that of Thioredoxin H1 (TRX1) from Arabidopsis thaliana (Mouse-ear cress).